A 146-amino-acid polypeptide reads, in one-letter code: Leptin (146 aa).

Cys96 and Cys146 are oxidised to a cystine.

The protein belongs to the leptin family.

It is found in the secreted. In terms of biological role, key player in the regulation of energy balance and body weight control. Once released into the circulation, has central and peripheral effects by binding LEPR, found in many tissues, which results in the activation of several major signaling pathways. In the hypothalamus, acts as an appetite-regulating factor that induces a decrease in food intake and an increase in energy consumption by inducing anorexinogenic factors and suppressing orexigenic neuropeptides, also regulates bone mass and secretion of hypothalamo-pituitary-adrenal hormones. In the periphery, increases basal metabolism, influences reproductive function, regulates pancreatic beta-cell function and insulin secretion, is pro-angiogenic for endothelial cell and affects innate and adaptive immunity. In the arcuate nucleus of the hypothalamus, activates by depolarization POMC neurons inducing FOS and SOCS3 expression to release anorexigenic peptides and inhibits by hyperpolarization NPY neurons inducing SOCS3 with a consequent reduction on release of orexigenic peptides. In addition to its known satiety inducing effect, has a modulatory role in nutrient absorption. In the intestine, reduces glucose absorption by enterocytes by activating PKC and leading to a sequential activation of p38, PI3K and ERK signaling pathways which exerts an inhibitory effect on glucose absorption. Acts as a growth factor on certain tissues, through the activation of different signaling pathways increases expression of genes involved in cell cycle regulation such as CCND1, via JAK2-STAT3 pathway, or VEGFA, via MAPK1/3 and PI3K-AKT1 pathways. May also play an apoptotic role via JAK2-STAT3 pathway and up-regulation of BIRC5 expression. Pro-angiogenic, has mitogenic activity on vascular endothelial cells and plays a role in matrix remodeling by regulating the expression of matrix metalloproteinases (MMPs) and tissue inhibitors of metalloproteinases (TIMPs). In innate immunity, modulates the activity and function of neutrophils by increasing chemotaxis and the secretion of oxygen radicals. Increases phagocytosis by macrophages and enhances secretion of pro-inflammatory mediators. Increases cytotoxic ability of NK cells. Plays a pro-inflammatory role, in synergy with IL1B, by inducing NOS2 which promotes the production of IL6, IL8 and Prostaglandin E2, through a signaling pathway that involves JAK2, PI3K, MAP2K1/MEK1 and MAPK14/p38. In adaptive immunity, promotes the switch of memory T-cells towards T helper-1 cell immune responses. Increases CD4(+)CD25(-) T-cell proliferation and reduces autophagy during TCR (T-cell receptor) stimulation, through MTOR signaling pathway activation and BCL2 up-regulation. This chain is Leptin (LEP), found in Gorilla gorilla gorilla (Western lowland gorilla).